The primary structure comprises 132 residues: Small ribosomal subunit protein uS8 (132 aa).

Belongs to the universal ribosomal protein uS8 family. In terms of assembly, part of the 30S ribosomal subunit. Contacts proteins S5 and S12.

One of the primary rRNA binding proteins, it binds directly to 16S rRNA central domain where it helps coordinate assembly of the platform of the 30S subunit. This chain is Small ribosomal subunit protein uS8, found in Chelativorans sp. (strain BNC1).